Consider the following 393-residue polypeptide: Formate-dependent phosphoribosylglycinamide formyltransferase (393 aa).

N(1)-(5-phospho-beta-D-ribosyl)glycinamide-binding positions include 22–23 (EL) and E82. ATP contacts are provided by residues R114, K155, 160–165 (SSGKGQ), 195–198 (EGFI), and E203. The 190-residue stretch at 119 to 308 (RLAAEELKLP…QFALHARAIL (190 aa)) folds into the ATP-grasp domain. 2 residues coordinate Mg(2+): E267 and E279. Residues D286, K356, and 363–364 (RR) contribute to the N(1)-(5-phospho-beta-D-ribosyl)glycinamide site.

Belongs to the PurK/PurT family. As to quaternary structure, homodimer.

The catalysed reaction is N(1)-(5-phospho-beta-D-ribosyl)glycinamide + formate + ATP = N(2)-formyl-N(1)-(5-phospho-beta-D-ribosyl)glycinamide + ADP + phosphate + H(+). It functions in the pathway purine metabolism; IMP biosynthesis via de novo pathway; N(2)-formyl-N(1)-(5-phospho-D-ribosyl)glycinamide from N(1)-(5-phospho-D-ribosyl)glycinamide (formate route): step 1/1. Functionally, involved in the de novo purine biosynthesis. Catalyzes the transfer of formate to 5-phospho-ribosyl-glycinamide (GAR), producing 5-phospho-ribosyl-N-formylglycinamide (FGAR). Formate is provided by PurU via hydrolysis of 10-formyl-tetrahydrofolate. This is Formate-dependent phosphoribosylglycinamide formyltransferase from Pseudomonas syringae pv. syringae (strain B728a).